Here is a 203-residue protein sequence, read N- to C-terminus: Small ribosomal subunit protein uS4 (203 aa).

An S4 RNA-binding domain is found at 93–158 (LRLDNVVYRL…QQLVTRFLDL (66 aa)).

The protein belongs to the universal ribosomal protein uS4 family. Part of the 30S ribosomal subunit. Contacts protein S5. The interaction surface between S4 and S5 is involved in control of translational fidelity.

Functionally, one of the primary rRNA binding proteins, it binds directly to 16S rRNA where it nucleates assembly of the body of the 30S subunit. With S5 and S12 plays an important role in translational accuracy. The sequence is that of Small ribosomal subunit protein uS4 from Akkermansia muciniphila (strain ATCC BAA-835 / DSM 22959 / JCM 33894 / BCRC 81048 / CCUG 64013 / CIP 107961 / Muc).